The chain runs to 428 residues: MFVDQVQVEVQAGKGGDGMVAFRREKFVPFGGPAGGDGGHGGSIILYVDEGLRTLMDFRYQRHFKASAGGNGQGKQMYGRAAEDRRIAVPAGTTVTDADTGEVLGDLTEPGQTLVVAKGGRGGRGNMHFVSPKNTAPEISENGEPGEHRFIKLELKVLADVGLVGFPSVGKSTLLSVVTQAKPKIAAYQFTTLVPNLGMVQLDDGTDFVMADLPGLIEGASQGVGLGIQFLRHVERTRVLLHLVEMDPDNGREPLDDYDQIRKELGAYDDNILKRPELVVATKMDLPGAAERFADFKAALLARGVAADHIFEISSLTHRGVTPLMHKTAEVLKTAPHFEPKQAAVKTADYKYQPEPALKVTRDSDGTFVLTGDKIERAFKMANLDHEDGAMRFARQLRSMGVDDALRDAGAESGDLVAIDDFTFEFVE.

Residues methionine 1 to leucine 158 form the Obg domain. Residues alanine 159–lysine 333 enclose the OBG-type G domain. Residues glycine 165–serine 172, phenylalanine 190–valine 194, aspartate 212–glycine 215, threonine 282–aspartate 285, and serine 314–leucine 316 contribute to the GTP site. Residues serine 172 and threonine 192 each contribute to the Mg(2+) site. An OCT domain is found at tyrosine 350 to glutamate 428.

It belongs to the TRAFAC class OBG-HflX-like GTPase superfamily. OBG GTPase family. As to quaternary structure, monomer. The cofactor is Mg(2+).

It localises to the cytoplasm. An essential GTPase which binds GTP, GDP and possibly (p)ppGpp with moderate affinity, with high nucleotide exchange rates and a fairly low GTP hydrolysis rate. Plays a role in control of the cell cycle, stress response, ribosome biogenesis and in those bacteria that undergo differentiation, in morphogenesis control. This is GTPase Obg from Lacticaseibacillus paracasei (strain ATCC 334 / BCRC 17002 / CCUG 31169 / CIP 107868 / KCTC 3260 / NRRL B-441) (Lactobacillus paracasei).